We begin with the raw amino-acid sequence, 212 residues long: Histone H1.2 (212 aa).

Over residues 1 to 17 the composition is skewed to low complexity; that stretch reads MSEAAPAAPAAAPPAEK. Positions 1-41 are disordered; that stretch reads MSEAAPAAPAAAPPAEKAPAKKKAAKKPAGVRRKASGPPVS. S2 is subject to N-acetylserine. Position 2 is a phosphoserine (S2). An N6-acetyllysine modification is found at K17. Basic residues predominate over residues 20–35; that stretch reads AKKKAAKKPAGVRRKA. An N6-(2-hydroxyisobutyryl)lysine mark is found at K23, K26, and K27. K34 is subject to N6-(beta-hydroxybutyryl)lysine; alternate. K34 carries the post-translational modification N6-crotonyllysine; alternate. K34 bears the N6-methyllysine; alternate mark. An H15 domain is found at 36 to 109; that stretch reads SGPPVSELIT…GASGSFKLNK (74 aa). Position 46 is an N6-(2-hydroxyisobutyryl)lysine (K46). K52 bears the N6-(beta-hydroxybutyryl)lysine; alternate mark. The residue at position 52 (K52) is an N6-(2-hydroxyisobutyryl)lysine; alternate. Citrulline is present on R54. K63 bears the N6-(2-hydroxyisobutyryl)lysine mark. Position 64 is an N6-(beta-hydroxybutyryl)lysine; alternate (K64). K64 is modified (N6-crotonyllysine; alternate). At K64 the chain carries N6-(2-hydroxyisobutyryl)lysine; alternate. Residues K75 and K81 each carry the N6-(2-hydroxyisobutyryl)lysine modification. 2 positions are modified to N6-(beta-hydroxybutyryl)lysine; alternate: K85 and K90. K85, K90, and K97 each carry N6-crotonyllysine; alternate. K85, K90, and K97 each carry N6-(2-hydroxyisobutyryl)lysine; alternate. K97 is subject to N6-succinyllysine; alternate. The disordered stretch occupies residues 98-212; the sequence is GTGASGSFKL…KAKKVAAKKK (115 aa). S104 is modified (phosphoserine; by PKC). N6-(beta-hydroxybutyryl)lysine is present on K106. Residues K110, K117, K121, K129, and K136 each carry the N6-(2-hydroxyisobutyryl)lysine modification. Residues 121 to 148 are compositionally biased toward low complexity; the sequence is KKAGAAKAKKPAGAAKKPKKATGAATPK. T146 is modified (phosphothreonine). The residue at position 148 (K148) is an N6-(2-hydroxyisobutyryl)lysine. Residues 149–160 are compositionally biased toward basic residues; it reads KAAKKTPKKAKK. N6-crotonyllysine; alternate occurs at positions 159 and 168. 2 positions are modified to N6-(2-hydroxyisobutyryl)lysine; alternate: K159 and K168. The span at 169–212 shows a compositional bias: basic residues; sequence KVAKSPKKAKVTKPKKVKSASKAVKPKAAKPKVAKAKKVAAKKK. Residue K186 is modified to N6-methyllysine; by EHMT1 and EHMT2. An ADP-ribosylserine modification is found at S187. The residue at position 212 (K212) is an N6-(2-hydroxyisobutyryl)lysine.

It belongs to the histone H1/H5 family. In terms of assembly, interacts with TSC22D1 isoform 2. H1 histones are progressively phosphorylated during the cell cycle, becoming maximally phosphorylated during late G2 phase and M phase, and being dephosphorylated sharply thereafter. Post-translationally, crotonylation (Kcr) is specifically present in male germ cells and marks testis-specific genes in post-meiotic cells, including X-linked genes that escape sex chromosome inactivation in haploid cells. Crotonylation marks active promoters and enhancers and confers resistance to transcriptional repressors. It is also associated with post-meiotically activated genes on autosomes. In terms of processing, ADP-ribosylated on Ser-187 in response to DNA damage. Citrullination at Arg-54 (H1R54ci) by PADI4 takes place within the DNA-binding site of H1 and results in its displacement from chromatin and global chromatin decondensation, thereby promoting pluripotency and stem cell maintenance. Post-translationally, hydroxybutyrylation of histones is induced by starvation.

It localises to the nucleus. Its subcellular location is the chromosome. Functionally, histone H1 protein binds to linker DNA between nucleosomes forming the macromolecular structure known as the chromatin fiber. Histones H1 are necessary for the condensation of nucleosome chains into higher-order structured fibers. Also acts as a regulator of individual gene transcription through chromatin remodeling, nucleosome spacing and DNA methylation. This chain is Histone H1.2, found in Mus musculus (Mouse).